Reading from the N-terminus, the 373-residue chain is Dual-specificity RNA methyltransferase RlmN (373 aa).

E94 serves as the catalytic Proton acceptor. Positions 100 to 339 constitute a Radical SAM core domain; sequence EDDRATLCVS…VIVRKTRGDD (240 aa). A disulfide bond links C107 and C344. [4Fe-4S] cluster contacts are provided by C114, C118, and C121. S-adenosyl-L-methionine contacts are provided by residues 168-169, S200, 222-224, and N301; these read GE and SIH. The active-site S-methylcysteine intermediate is the C344.

Belongs to the radical SAM superfamily. RlmN family. [4Fe-4S] cluster serves as cofactor.

The protein resides in the cytoplasm. The enzyme catalyses adenosine(2503) in 23S rRNA + 2 reduced [2Fe-2S]-[ferredoxin] + 2 S-adenosyl-L-methionine = 2-methyladenosine(2503) in 23S rRNA + 5'-deoxyadenosine + L-methionine + 2 oxidized [2Fe-2S]-[ferredoxin] + S-adenosyl-L-homocysteine. The catalysed reaction is adenosine(37) in tRNA + 2 reduced [2Fe-2S]-[ferredoxin] + 2 S-adenosyl-L-methionine = 2-methyladenosine(37) in tRNA + 5'-deoxyadenosine + L-methionine + 2 oxidized [2Fe-2S]-[ferredoxin] + S-adenosyl-L-homocysteine. Its function is as follows. Specifically methylates position 2 of adenine 2503 in 23S rRNA and position 2 of adenine 37 in tRNAs. m2A2503 modification seems to play a crucial role in the proofreading step occurring at the peptidyl transferase center and thus would serve to optimize ribosomal fidelity. The chain is Dual-specificity RNA methyltransferase RlmN from Shewanella sp. (strain W3-18-1).